The following is a 497-amino-acid chain: Bifunctional protein GlmU (497 aa).

The pyrophosphorylase stretch occupies residues 1–241 (MSPETIGPAA…RWQVEGANDR (241 aa)). UDP-N-acetyl-alpha-D-glucosamine contacts are provided by residues 14–17 (LAAG), K28, Q81, 86–87 (GT), 112–114 (YGD), G151, E166, N181, and N239. D114 contributes to the Mg(2+) binding site. N239 serves as a coordination point for Mg(2+). Positions 242-262 (IQLSALAAEHNRRIIESWMRA) are linker. The tract at residues 263–497 (GVTVVDPATT…QATIEEGKQA (235 aa)) is N-acetyltransferase. The UDP-N-acetyl-alpha-D-glucosamine site is built by R344 and K362. H374 functions as the Proton acceptor in the catalytic mechanism. Y377 and N388 together coordinate UDP-N-acetyl-alpha-D-glucosamine. Residues 397-398 (NY), S416, and A434 each bind acetyl-CoA.

The protein in the N-terminal section; belongs to the N-acetylglucosamine-1-phosphate uridyltransferase family. This sequence in the C-terminal section; belongs to the transferase hexapeptide repeat family. In terms of assembly, homotrimer. Requires Mg(2+) as cofactor.

The protein localises to the cytoplasm. The catalysed reaction is alpha-D-glucosamine 1-phosphate + acetyl-CoA = N-acetyl-alpha-D-glucosamine 1-phosphate + CoA + H(+). It carries out the reaction N-acetyl-alpha-D-glucosamine 1-phosphate + UTP + H(+) = UDP-N-acetyl-alpha-D-glucosamine + diphosphate. Its pathway is nucleotide-sugar biosynthesis; UDP-N-acetyl-alpha-D-glucosamine biosynthesis; N-acetyl-alpha-D-glucosamine 1-phosphate from alpha-D-glucosamine 6-phosphate (route II): step 2/2. It functions in the pathway nucleotide-sugar biosynthesis; UDP-N-acetyl-alpha-D-glucosamine biosynthesis; UDP-N-acetyl-alpha-D-glucosamine from N-acetyl-alpha-D-glucosamine 1-phosphate: step 1/1. It participates in bacterial outer membrane biogenesis; LPS lipid A biosynthesis. In terms of biological role, catalyzes the last two sequential reactions in the de novo biosynthetic pathway for UDP-N-acetylglucosamine (UDP-GlcNAc). The C-terminal domain catalyzes the transfer of acetyl group from acetyl coenzyme A to glucosamine-1-phosphate (GlcN-1-P) to produce N-acetylglucosamine-1-phosphate (GlcNAc-1-P), which is converted into UDP-GlcNAc by the transfer of uridine 5-monophosphate (from uridine 5-triphosphate), a reaction catalyzed by the N-terminal domain. In Paenarthrobacter aurescens (strain TC1), this protein is Bifunctional protein GlmU.